Reading from the N-terminus, the 345-residue chain is 4-hydroxythreonine-4-phosphate dehydrogenase (345 aa).

Substrate is bound by residues histidine 148 and threonine 149. A divalent metal cation is bound by residues histidine 182, histidine 227, and histidine 282. Substrate contacts are provided by lysine 290, asparagine 299, and arginine 308.

This sequence belongs to the PdxA family. As to quaternary structure, homodimer. The cofactor is Zn(2+). Requires Mg(2+) as cofactor. It depends on Co(2+) as a cofactor.

The protein resides in the cytoplasm. The enzyme catalyses 4-(phosphooxy)-L-threonine + NAD(+) = 3-amino-2-oxopropyl phosphate + CO2 + NADH. It functions in the pathway cofactor biosynthesis; pyridoxine 5'-phosphate biosynthesis; pyridoxine 5'-phosphate from D-erythrose 4-phosphate: step 4/5. In terms of biological role, catalyzes the NAD(P)-dependent oxidation of 4-(phosphooxy)-L-threonine (HTP) into 2-amino-3-oxo-4-(phosphooxy)butyric acid which spontaneously decarboxylates to form 3-amino-2-oxopropyl phosphate (AHAP). The polypeptide is 4-hydroxythreonine-4-phosphate dehydrogenase (Bradyrhizobium diazoefficiens (strain JCM 10833 / BCRC 13528 / IAM 13628 / NBRC 14792 / USDA 110)).